The sequence spans 148 residues: Large ribosomal subunit protein uL15 (148 aa).

The interval 1–46 (MITIEDLKPTPGSNKKYKRLGRGQGSGKGKTAGKGHKGQKSRGTGK) is disordered. A compositionally biased stretch (basic residues) spans 31-45 (TAGKGHKGQKSRGTG).

The protein belongs to the universal ribosomal protein uL15 family. In terms of assembly, part of the 50S ribosomal subunit.

In terms of biological role, binds to the 23S rRNA. This chain is Large ribosomal subunit protein uL15, found in Fervidobacterium nodosum (strain ATCC 35602 / DSM 5306 / Rt17-B1).